A 438-amino-acid polypeptide reads, in one-letter code: Protein DAY-LENGTH-DEPENDENT DELAYED-GREENING 1, chloroplastic (438 aa).

Residues 1 to 54 (MSLMSSSMVLCHCLSFSSQNPDPESSSSSLLRYKPCDSISLWGKRRKKLWRFVP) constitute a chloroplast transit peptide. 4 consecutive transmembrane segments (helical) span residues 216–236 (FLAV…DYLL), 314–334 (AFAN…LLYA), 359–379 (AFLI…SGWE), and 398–418 (ITIF…LWLF).

Belongs to the CemA family.

It localises to the plastid. The protein localises to the chloroplast envelope. It is found in the chloroplast membrane. The catalysed reaction is K(+)(in) + H(+)(out) = K(+)(out) + H(+)(in). The enzyme catalyses Ca(2+)(in) + H(+)(out) = Ca(2+)(out) + H(+)(in). In terms of biological role, promotes K(+)/H(+) antiport activity supporting K(+) efflux to control H(+) homeostasis in chloroplasts. Also able to ensure Ca(2+)/H(+) antiport activity in vitro. Essential for chloroplast pH regulation and optimization of non-photochemical quenching (NPQ), a regulatory mechanism that dissipates excess light energy; acts downstream of PSBS but independently from PGR5 and FLAP1. This is Protein DAY-LENGTH-DEPENDENT DELAYED-GREENING 1, chloroplastic from Arabidopsis thaliana (Mouse-ear cress).